The sequence spans 314 residues: Thymidylate synthase (314 aa).

DUMP-binding positions include Arg-21 and 176 to 177; that span reads RR. The active-site Nucleophile is Cys-196. Residues 216 to 219, Asn-227, and 257 to 259 each bind dUMP; these read RSAD and HLY. Asp-219 provides a ligand contact to (6R)-5,10-methylene-5,6,7,8-tetrahydrofolate. (6R)-5,10-methylene-5,6,7,8-tetrahydrofolate is bound at residue Ser-313.

This sequence belongs to the thymidylate synthase family. Bacterial-type ThyA subfamily. Homodimer.

The protein resides in the cytoplasm. The enzyme catalyses dUMP + (6R)-5,10-methylene-5,6,7,8-tetrahydrofolate = 7,8-dihydrofolate + dTMP. It participates in pyrimidine metabolism; dTTP biosynthesis. Its function is as follows. Catalyzes the reductive methylation of 2'-deoxyuridine-5'-monophosphate (dUMP) to 2'-deoxythymidine-5'-monophosphate (dTMP) while utilizing 5,10-methylenetetrahydrofolate (mTHF) as the methyl donor and reductant in the reaction, yielding dihydrofolate (DHF) as a by-product. This enzymatic reaction provides an intracellular de novo source of dTMP, an essential precursor for DNA biosynthesis. This Listeria monocytogenes serotype 4b (strain F2365) protein is Thymidylate synthase.